A 59-amino-acid polypeptide reads, in one-letter code: Large ribosomal subunit protein uL30 (59 aa).

The protein belongs to the universal ribosomal protein uL30 family. In terms of assembly, part of the 50S ribosomal subunit.

The sequence is that of Large ribosomal subunit protein uL30 from Stutzerimonas stutzeri (strain A1501) (Pseudomonas stutzeri).